The sequence spans 247 residues: Small ribosomal subunit protein uS2 (247 aa).

It belongs to the universal ribosomal protein uS2 family.

This chain is Small ribosomal subunit protein uS2, found in Cupriavidus pinatubonensis (strain JMP 134 / LMG 1197) (Cupriavidus necator (strain JMP 134)).